Consider the following 132-residue polypeptide: MKKVLALVVAAAMGLSSAAFAAETTTSSAAPATATATTTKAAPAKTVHHKKHKKAVEQKAQAAKKHHKKAVKKQEAAPATTTAPVEQKAQAAKKHHKAAAKPAVAQKAQAAKKHHKKAVKHEAAKPAAQPAA.

The N-terminal stretch at 1–21 (MKKVLALVVAAAMGLSSAAFA) is a signal peptide. The span at 20–45 (FAAETTTSSAAPATATATTTKAAPAK) shows a compositional bias: low complexity. Residues 20–132 (FAAETTTSSA…AAKPAAQPAA (113 aa)) are disordered. Residues 22–90 (AETTTSSAAP…TTAPVEQKAQ (69 aa)) constitute a propeptide that is removed on maturation. The segment covering 62–71 (AAKKHHKKAV) has biased composition (basic residues). Composition is skewed to low complexity over residues 76–90 (AAPA…QKAQ) and 100–109 (AKPAVAQKAQ). Residues 110 to 119 (AAKKHHKKAV) are compositionally biased toward basic residues.

The protein belongs to the Asr family. Proteolytic processing gives rise to the active protein.

The protein localises to the periplasm. Functionally, required for growth and/or survival at acidic conditions. The chain is Acid shock protein from Enterobacter sp. (strain 638).